Consider the following 476-residue polypeptide: Endonuclease SceI small subunit (476 aa).

The protein belongs to the LAGLIDADG endonuclease family. As to quaternary structure, endonuclease SceI (Endo.SceI) is a heterodimer of ENS2 and SSC1. In terms of processing, the N-terminus is blocked.

It is found in the mitochondrion. Functionally, catalytic component of endonuclease SceI (Endo.SceI), which cleaves specifically at multiple sites on mitochondrial DNA and produces double-stranded breaks. The chain is Endonuclease SceI small subunit (ENS2) from Saccharomyces cerevisiae (Baker's yeast).